The following is a 38-amino-acid chain: Large ribosomal subunit protein bL36 (38 aa).

It belongs to the bacterial ribosomal protein bL36 family.

In Roseiflexus castenholzii (strain DSM 13941 / HLO8), this protein is Large ribosomal subunit protein bL36.